We begin with the raw amino-acid sequence, 91 residues long: Teretoxin Tan6.2 (91 aa).

An N-terminal signal peptide occupies residues 1 to 21 (MATSGRLLCVCLVLGLVFGSL). Residues 22 to 50 (GYPVMEKKRAGKNFDLGTIANWAWQIGEK) constitute a propeptide that is removed on maturation.

The protein belongs to the teretoxin M (TM) superfamily. Contains 3 disulfide bonds. In terms of tissue distribution, expressed by the venom duct.

The protein localises to the secreted. The chain is Teretoxin Tan6.2 from Terebra anilis (Auger snail).